The sequence spans 85 residues: U4-theraphotoxin-Hhn1j (85 aa).

Positions 1–22 are cleaved as a signal peptide; the sequence is MKVTLIAILTCAAVLVLHTTAA. Residues 23 to 48 constitute a propeptide that is removed on maturation; that stretch reads EELEAESQLMEVGMPDTELAAVDEER. 3 cysteine pairs are disulfide-bonded: Cys-52–Cys-66, Cys-56–Cys-77, and Cys-71–Cys-82.

This sequence belongs to the neurotoxin 12 (Hwtx-2) family. 02 (Hwtx-2) subfamily. In terms of tissue distribution, expressed by the venom gland.

The protein localises to the secreted. Its function is as follows. Postsynaptic neurotoxin. The protein is U4-theraphotoxin-Hhn1j of Cyriopagopus hainanus (Chinese bird spider).